Here is a 231-residue protein sequence, read N- to C-terminus: Uridylate kinase (231 aa).

An ATP-binding site is contributed by 6–9 (KLSG). Residues 14–19 (GEGGRG) are involved in allosteric activation by GTP. 2 residues coordinate ATP: G49 and R53. Residues D66 and 127 to 134 (TSNPFFTT) contribute to the UMP site. Residues T154, Y160, and D163 each coordinate ATP.

This sequence belongs to the UMP kinase family. As to quaternary structure, homohexamer.

Its subcellular location is the cytoplasm. The catalysed reaction is UMP + ATP = UDP + ADP. The protein operates within pyrimidine metabolism; CTP biosynthesis via de novo pathway; UDP from UMP (UMPK route): step 1/1. Its activity is regulated as follows. Allosterically activated by GTP. Inhibited by UTP. Functionally, catalyzes the reversible phosphorylation of UMP to UDP. The polypeptide is Uridylate kinase (Thermotoga maritima (strain ATCC 43589 / DSM 3109 / JCM 10099 / NBRC 100826 / MSB8)).